A 92-amino-acid polypeptide reads, in one-letter code: Putative membrane protein insertion efficiency factor (92 aa).

This sequence belongs to the UPF0161 family.

It localises to the cell inner membrane. Could be involved in insertion of integral membrane proteins into the membrane. In Synechococcus sp. (strain CC9902), this protein is Putative membrane protein insertion efficiency factor.